Reading from the N-terminus, the 207-residue chain is FMN-dependent NADH:quinone oxidoreductase (207 aa).

Ser10 lines the FMN pocket.

This sequence belongs to the azoreductase type 1 family. In terms of assembly, homodimer. The cofactor is FMN.

It catalyses the reaction 2 a quinone + NADH + H(+) = 2 a 1,4-benzosemiquinone + NAD(+). The catalysed reaction is N,N-dimethyl-1,4-phenylenediamine + anthranilate + 2 NAD(+) = 2-(4-dimethylaminophenyl)diazenylbenzoate + 2 NADH + 2 H(+). Quinone reductase that provides resistance to thiol-specific stress caused by electrophilic quinones. Its function is as follows. Also exhibits azoreductase activity. Catalyzes the reductive cleavage of the azo bond in aromatic azo compounds to the corresponding amines. This is FMN-dependent NADH:quinone oxidoreductase from Shouchella clausii (strain KSM-K16) (Alkalihalobacillus clausii).